The primary structure comprises 221 residues: Glutathione peroxidase (221 aa).

A signal peptide spans 1–19 (MFIQLLILSYAILLQLIAT). Residue N28 is glycosylated (N-linked (GlcNAc...) asparagine). C72 is an active-site residue. N87 and N90 each carry an N-linked (GlcNAc...) asparagine glycan.

The protein belongs to the glutathione peroxidase family. As to quaternary structure, homotetramer.

Its subcellular location is the secreted. It localises to the extracellular space. It carries out the reaction 2 glutathione + H2O2 = glutathione disulfide + 2 H2O. This Dirofilaria immitis (Canine heartworm) protein is Glutathione peroxidase.